We begin with the raw amino-acid sequence, 965 residues long: Fibronectin-binding protein A (965 aa).

Residues 1–36 (MKNNLRYGIRKHKLGAASVFLGTMIVIGMGQDKEAA) form the signal peptide. Positions 7 to 18 (YGIRKHKLGAAS) match the YSIRK-G/S signaling motif motif. The segment at 37 to 206 (ASEQKTTTVE…VTSKVTVEDE (170 aa)) is disordered. The ligand-binding A region stretch occupies residues 37 to 514 (ASEQKTTTVE…SNKANGDGKY (478 aa)). Over residues 39–55 (EQKTTTVEENGNSATDN) the composition is skewed to polar residues. The segment covering 59 to 74 (ETQTTTTNVNTIDETQ) has biased composition (low complexity). Over residues 75–92 (SYSATATEQPSNATQVTT) the composition is skewed to polar residues. Residues 112 to 122 (TVKEEVVKEEA) show a composition bias toward basic and acidic residues. The span at 126-139 (VKETTQSQDNSGDQ) shows a compositional bias: polar residues. A compositionally biased stretch (basic and acidic residues) spans 179–193 (DVAEAKEASDAKVET). The tract at residues 194 to 514 (GTDVTSKVTV…SNKANGDGKY (321 aa)) is fibrinogen/elastin/tropoelastin-binding. The segment at 515 to 837 (GPIVDSNNFE…EGQQTIEEDT (323 aa)) is fibronectin-binding. One copy of the B-1 repeat lies at 548–577 (ENQDNTPLDIDYHTAIDGEGGYVDGYIETI). Residues 548 to 607 (ENQDNTPLDIDYHTAIDGEGGYVDGYIETIEETDSSAIDIDYHTAVDSEAGHVGGYTESS) form a 2 X approximate tandem repeats region. Residues 578 to 607 (EETDSSAIDIDYHTAVDSEAGHVGGYTESS) form a B-2 repeat. Disordered stretches follow at residues 598 to 625 (GHVG…NSKH), 743 to 774 (LGYE…GNII), 794 to 903 (IEED…GKVV), and 916 to 942 (VAPT…NKGM). One copy of the D-1; truncated repeat lies at 748-770 (GQNSGNQSFEEDTEEDKPKYEQG). The interval 748 to 839 (GQNSGNQSFE…QQTIEEDTTP (92 aa)) is 4 X approximate tandem repeats. A D-2; truncated repeat occupies 771-785 (GNIIDIDFDSVPQIH). The D-3 repeat unit spans residues 786 to 824 (GFNKHNEIIEEDTNKDKPNYQFGGHNSVDFEEDTLPKVS). Positions 794–803 (IEEDTNKDKP) are enriched in basic and acidic residues. One copy of the D-4; truncated repeat lies at 825–839 (GQNEGQQTIEEDTTP). Over residues 839–885 (PPTPPTPEVPSEPGTPTPPTPEVPSEPGKPTPPTPEVPAEPGKPVPP) the composition is skewed to pro residues. 4 WR repeats span residues 840–853 (PTPP…EPGT), 854–867 (PTPP…EPGK), 868–881 (PTPP…EPGK), and 882–895 (PVPP…KPSK). The segment at 840 to 895 (PTPPTPEVPSEPGTPTPPTPEVPSEPGKPTPPTPEVPAEPGKPVPPAKEEPKKPSK) is 4 X tandem repeats, Pro-rich (WR). Residues 929–933 (LPETG) carry the LPXTG sorting signal motif. Threonine 932 carries the post-translational modification Pentaglycyl murein peptidoglycan amidated threonine. Positions 933-965 (GGEESTNKGMLFGGLFSILGLALLRRNKKNHKA) are cleaved as a propeptide — removed by sortase.

The protein localises to the secreted. The protein resides in the cell wall. In terms of biological role, promotes bacterial attachment to multiple substrates, such as fibronectin (Fn), fibrinogen (Fg), elastin peptides and tropoelastin. This confers to S.aureus the ability to invade endothelial cells. Promotes adherence to and aggregation of activated platelets. The sequence is that of Fibronectin-binding protein A (fnbA) from Staphylococcus aureus (strain MRSA252).